The chain runs to 586 residues: Thioredoxin domain-containing protein 3 (586 aa).

In terms of domain architecture, Thioredoxin spans 10–116; that stretch reads LQSVVNSQNL…NRKVITLIDE (107 aa). Cys39 and Cys42 form a disulfide bridge. NDK stretches follow at residues 157 to 254, 312 to 452, and 453 to 586; these read MAII…VLEE, VQTT…STLA, and LIKP…NPEN.

It in the C-terminal section; belongs to the NDK family. Monomer. In terms of tissue distribution, testis-specific. Expressed mainly in round spermatids.

Its subcellular location is the cytoplasm. Functionally, probably required during the final stages of sperm tail maturation in the testis and/or epididymis, where extensive disulfide bonding of fibrous sheath (FS) proteins occurs. In vitro, it has neither nucleoside diphosphate kinase (NDPK) activity nor reducing activity on disulfide bonds. Exhibits a 3'-5' exonuclease activity with a preference for single-stranded DNA, suggesting roles in DNA proofreading and repair. This is Thioredoxin domain-containing protein 3 (Nme8) from Mus musculus (Mouse).